Consider the following 477-residue polypeptide: Transmembrane and coiled-coil domain protein 3 (477 aa).

A disordered region spans residues 1-24 (MPGSDTALTVDRTYSDPGRHHRCK). Ser-46 bears the Phosphoserine mark. Coiled-coil stretches lie at residues 63–83 (KVKLNADSLRQKILKVTEQIK) and 112–149 (KQVFEKKNQKSAHSIAQLQKKLEQYHRKLREIEQNGVT). The interval 234-280 (ASPRAYGGSATIVNKPKYGSDDECSSGTSGSADSNGNQSFGAGGTST) is disordered. Ser-253 carries the post-translational modification Phosphoserine. A compositionally biased stretch (polar residues) spans 258–280 (SSGTSGSADSNGNQSFGAGGTST). A coiled-coil region spans residues 284–398 (QGKIAKIMEE…KLELHQQEQQ (115 aa)). The next 2 helical transmembrane spans lie at 409–429 (VLLGKCINVVLAFMTVILVCV) and 450–470 (FFAVTLLAIFCKNWDHILCAI).

The protein belongs to the TEX28 family. In terms of assembly, may form homodimers and heterodimers with TMCC2 or TMCC3 via the coiled-coil domains. Interacts with ribosomal proteins RPL4 and RPS6.

It is found in the endoplasmic reticulum membrane. The protein is Transmembrane and coiled-coil domain protein 3 of Mus musculus (Mouse).